The primary structure comprises 476 residues: MKAEAEIIFVTYPSPGHLLVSIEFAKSLIKRDDRIHTITILYWALPLAPQAHLFAKSLVASQPRIRLLALPDVQNPPPLELFFKAPEAYILESTKKTVPLVRDALSTLVSSRKESGSVRVVGLVIDFFCVPMIEVANELNLPSYIFLTCNAGFLSMMKYLPERHRITTSELDLSSGNVEHPIPGYVCSVPTKVLPPGLFVRESYEAWVEIAEKFPGAKGILVNSVTCLEQNAFDYFARLDENYPPVYPVGPVLSLKDRPSPNLDASDRDRIMRWLEDQPESSIVYICFGSLGIIGKLQIEEIAEALELTGHRFLWSIRTNPTEKASPYDLLPEGFLDRTASKGLVCDWAPQVEVLAHKALGGFVSHCGWNSVLESLWFGVPIATWPMYAEQQLNAFSMVKELGLAVELRLDYVSAYGEIVKAEEIAGAIRSLMDGEDTPRKRVKEMAEAARNALMDGGSSFVAVKRFLDELIGGDV.

Residues S290, 349–351, 366–374, and 388–391 each bind UDP-alpha-D-glucose; these read APQ, HCGWNSVLE, and YAEQ.

The protein belongs to the UDP-glycosyltransferase family.

Functionally, possesses low quercetin 3-O-glucosyltransferase activity in vitro. This Arabidopsis thaliana (Mouse-ear cress) protein is UDP-glycosyltransferase 71C3 (UGT71C3).